The chain runs to 420 residues: Gamma-glutamyl phosphate reductase (420 aa).

The protein belongs to the gamma-glutamyl phosphate reductase family.

The protein resides in the cytoplasm. The catalysed reaction is L-glutamate 5-semialdehyde + phosphate + NADP(+) = L-glutamyl 5-phosphate + NADPH + H(+). It participates in amino-acid biosynthesis; L-proline biosynthesis; L-glutamate 5-semialdehyde from L-glutamate: step 2/2. Its function is as follows. Catalyzes the NADPH-dependent reduction of L-glutamate 5-phosphate into L-glutamate 5-semialdehyde and phosphate. The product spontaneously undergoes cyclization to form 1-pyrroline-5-carboxylate. The polypeptide is Gamma-glutamyl phosphate reductase (Acidiphilium cryptum (strain JF-5)).